Consider the following 320-residue polypeptide: MLTGQFLTPLMSGFVITVIFMPLFIGYLRFKKEGQTIRDEGPKWHAKKNGTPTMGGLVFIVAAVISSIWVAIWLQQLTNSLWIALFILVLYGLLGFSDDFIKVFKKQNLGLRAWQKLAGQILGGAVFLAVYFHEGFSHALNIPLIGTISSSWFFSLFVIVWLVGFSNAVNLADGIDGLVAGLAIVSFATYTIIAFRQNRIDVAIFGLTIIGGLIGFLIFNHKPAQIFMGDVGSLALGGALAAMSILLHREFSLLLIGLVYVIETASVMLQVASFKLFHKRIFKMSPIHHHFEMSGWSEWRIDISFWVFSIICSAIYLLIF.

10 consecutive transmembrane segments (helical) span residues 6-26 (FLTP…LFIG), 54-74 (MGGL…AIWL), 81-101 (LWIA…DDFI), 117-137 (LAGQ…EGFS), 145-165 (IGTI…LVGF), 175-195 (IDGL…IIAF), 200-220 (IDVA…LIFN), 226-246 (IFMG…MSIL), 251-271 (FSLL…MLQV), and 300-320 (RIDI…LLIF).

This sequence belongs to the glycosyltransferase 4 family. MraY subfamily. Requires Mg(2+) as cofactor.

It is found in the cell membrane. It catalyses the reaction UDP-N-acetyl-alpha-D-muramoyl-L-alanyl-gamma-D-glutamyl-L-lysyl-D-alanyl-D-alanine + di-trans,octa-cis-undecaprenyl phosphate = Mur2Ac(oyl-L-Ala-gamma-D-Glu-L-Lys-D-Ala-D-Ala)-di-trans,octa-cis-undecaprenyl diphosphate + UMP. It functions in the pathway cell wall biogenesis; peptidoglycan biosynthesis. Its function is as follows. Catalyzes the initial step of the lipid cycle reactions in the biosynthesis of the cell wall peptidoglycan: transfers peptidoglycan precursor phospho-MurNAc-pentapeptide from UDP-MurNAc-pentapeptide onto the lipid carrier undecaprenyl phosphate, yielding undecaprenyl-pyrophosphoryl-MurNAc-pentapeptide, known as lipid I. The sequence is that of Phospho-N-acetylmuramoyl-pentapeptide-transferase from Latilactobacillus sakei subsp. sakei (strain 23K) (Lactobacillus sakei subsp. sakei).